The sequence spans 1258 residues: Non-secreted LysM effector LysM19 (1258 aa).

Residues 148–168 (VTQSLPNISSHEKRDDHEGNS) form a disordered region. Basic and acidic residues predominate over residues 157–168 (SHEKRDDHEGNS). 2 consecutive LysM domains span residues 1028–1073 (IVYT…SICL) and 1179–1227 (RWHV…AYCT).

Belongs to the secreted LysM effector family.

Its function is as follows. Non-secreted LysM effector that might be involved in manipulation of host defenses for successful infection. This is Non-secreted LysM effector LysM19 from Penicillium expansum (Blue mold rot fungus).